An 865-amino-acid chain; its full sequence is Alanine--tRNA ligase (865 aa).

The Zn(2+) site is built by H554, H558, C656, and H660.

Belongs to the class-II aminoacyl-tRNA synthetase family. It depends on Zn(2+) as a cofactor.

The protein localises to the cytoplasm. It carries out the reaction tRNA(Ala) + L-alanine + ATP = L-alanyl-tRNA(Ala) + AMP + diphosphate. Its function is as follows. Catalyzes the attachment of alanine to tRNA(Ala) in a two-step reaction: alanine is first activated by ATP to form Ala-AMP and then transferred to the acceptor end of tRNA(Ala). Also edits incorrectly charged Ser-tRNA(Ala) and Gly-tRNA(Ala) via its editing domain. In Idiomarina loihiensis (strain ATCC BAA-735 / DSM 15497 / L2-TR), this protein is Alanine--tRNA ligase.